Consider the following 560-residue polypeptide: DNA ligase B (560 aa).

The active-site N6-AMP-lysine intermediate is the lysine 124.

Belongs to the NAD-dependent DNA ligase family. LigB subfamily.

The enzyme catalyses NAD(+) + (deoxyribonucleotide)n-3'-hydroxyl + 5'-phospho-(deoxyribonucleotide)m = (deoxyribonucleotide)n+m + AMP + beta-nicotinamide D-nucleotide.. Catalyzes the formation of phosphodiester linkages between 5'-phosphoryl and 3'-hydroxyl groups in double-stranded DNA using NAD as a coenzyme and as the energy source for the reaction. The polypeptide is DNA ligase B (Citrobacter koseri (strain ATCC BAA-895 / CDC 4225-83 / SGSC4696)).